A 98-amino-acid polypeptide reads, in one-letter code: MSLVYMNIMTAFMVALAGLLMYRSHLMSSLLCLEGMMLSLFVMASLTILNSHFTLASMMPIILLVFAACEAALGLSLLVKVSNTYGTDYVQNLNLLQC.

3 consecutive transmembrane segments (helical) span residues 1-21 (MSLV…GLLM), 29-49 (SLLC…LTIL), and 59-79 (MPII…SLLV).

Belongs to the complex I subunit 4L family. As to quaternary structure, core subunit of respiratory chain NADH dehydrogenase (Complex I) which is composed of 45 different subunits.

The protein resides in the mitochondrion inner membrane. The enzyme catalyses a ubiquinone + NADH + 5 H(+)(in) = a ubiquinol + NAD(+) + 4 H(+)(out). Functionally, core subunit of the mitochondrial membrane respiratory chain NADH dehydrogenase (Complex I) which catalyzes electron transfer from NADH through the respiratory chain, using ubiquinone as an electron acceptor. Part of the enzyme membrane arm which is embedded in the lipid bilayer and involved in proton translocation. The polypeptide is NADH-ubiquinone oxidoreductase chain 4L (MT-ND4L) (Cervus elaphus (Red deer)).